We begin with the raw amino-acid sequence, 249 residues long: Nicotinamide/nicotinic acid mononucleotide adenylyltransferase (249 aa).

Residues Ser34 and Phe35 each coordinate NAD(+). 2 residues coordinate ATP: His42 and Lys75. NAD(+) is bound by residues Thr112, Gly141, Asp143, Trp154, Arg173, and Asn204. 209–210 (SR) contacts ATP.

Belongs to the eukaryotic NMN adenylyltransferase family. A divalent metal cation serves as cofactor.

It catalyses the reaction beta-nicotinamide D-ribonucleotide + ATP + H(+) = diphosphate + NAD(+). The enzyme catalyses nicotinate beta-D-ribonucleotide + ATP + H(+) = deamido-NAD(+) + diphosphate. The protein operates within cofactor biosynthesis; NAD(+) biosynthesis; deamido-NAD(+) from nicotinate D-ribonucleotide: step 1/1. It participates in cofactor biosynthesis; NAD(+) biosynthesis; NAD(+) from nicotinamide D-ribonucleotide: step 1/1. Its function is as follows. Catalyzes the formation of NAD(+) from nicotinamide mononucleotide (NMN) and ATP. Can also use the deamidated form; nicotinic acid mononucleotide (NaMN) as substrate. The sequence is that of Nicotinamide/nicotinic acid mononucleotide adenylyltransferase from Oryza sativa subsp. japonica (Rice).